We begin with the raw amino-acid sequence, 162 residues long: Sec-independent protein translocase protein TatB (162 aa).

A helical transmembrane segment spans residues 1 to 21 (MFDIGFSELILIFVVGLVVLG). Residues 136-162 (LTAYYPPDDDLVSPSTTKLEQDKQNVN) are disordered.

This sequence belongs to the TatB family. The Tat system comprises two distinct complexes: a TatABC complex, containing multiple copies of TatA, TatB and TatC subunits, and a separate TatA complex, containing only TatA subunits. Substrates initially bind to the TatABC complex, which probably triggers association of the separate TatA complex to form the active translocon.

It is found in the cell inner membrane. In terms of biological role, part of the twin-arginine translocation (Tat) system that transports large folded proteins containing a characteristic twin-arginine motif in their signal peptide across membranes. Together with TatC, TatB is part of a receptor directly interacting with Tat signal peptides. TatB may form an oligomeric binding site that transiently accommodates folded Tat precursor proteins before their translocation. This is Sec-independent protein translocase protein TatB from Haemophilus ducreyi (strain 35000HP / ATCC 700724).